We begin with the raw amino-acid sequence, 148 residues long: Large ribosomal subunit protein uL15 (148 aa).

The span at 1–30 shows a compositional bias: basic residues; sequence MPSRLRKTRKLRGHVSHGHGRIGKHRKHPG. Residues 1–38 are disordered; it reads MPSRLRKTRKLRGHVSHGHGRIGKHRKHPGGRGNAGGL. (3S)-3-hydroxyhistidine is present on His39. 2 positions are modified to N6-acetyllysine: Lys47 and Lys55. Phosphoserine is present on Ser68. Lys110 bears the N6-acetyllysine mark.

The protein belongs to the universal ribosomal protein uL15 family. In terms of processing, hydroxylated on His-39 by MINA.

The sequence is that of Large ribosomal subunit protein uL15 (RPL27A) from Pan troglodytes (Chimpanzee).